The sequence spans 137 residues: Flavodoxin (137 aa).

In terms of domain architecture, Flavodoxin-like spans 2–137; it reads VEIVYWSGTG…KELGEAAAKA (136 aa).

This sequence belongs to the flavodoxin family. The cofactor is FMN.

Low-potential electron donor to a number of redox enzymes. This is Flavodoxin from Megasphaera elsdenii.